Reading from the N-terminus, the 219-residue chain is Uracil-DNA glycosylase (219 aa).

The active-site Proton acceptor is D61.

This sequence belongs to the uracil-DNA glycosylase (UDG) superfamily. UNG family.

It is found in the cytoplasm. The enzyme catalyses Hydrolyzes single-stranded DNA or mismatched double-stranded DNA and polynucleotides, releasing free uracil.. In terms of biological role, excises uracil residues from the DNA which can arise as a result of misincorporation of dUMP residues by DNA polymerase or due to deamination of cytosine. This Neisseria meningitidis serogroup B (strain ATCC BAA-335 / MC58) protein is Uracil-DNA glycosylase.